A 196-amino-acid polypeptide reads, in one-letter code: Glycerol-3-phosphate acyltransferase (196 aa).

A run of 5 helical transmembrane segments spans residues 4-24 (LTLT…AILV), 56-76 (ATVL…AYFL), 80-100 (SLYL…PIFF), 114-134 (TLLP…VLVV), and 155-175 (VYFL…LILF).

The protein belongs to the PlsY family. Probably interacts with PlsX.

The protein localises to the cell inner membrane. The enzyme catalyses an acyl phosphate + sn-glycerol 3-phosphate = a 1-acyl-sn-glycero-3-phosphate + phosphate. The protein operates within lipid metabolism; phospholipid metabolism. Functionally, catalyzes the transfer of an acyl group from acyl-phosphate (acyl-PO(4)) to glycerol-3-phosphate (G3P) to form lysophosphatidic acid (LPA). This enzyme utilizes acyl-phosphate as fatty acyl donor, but not acyl-CoA or acyl-ACP. The sequence is that of Glycerol-3-phosphate acyltransferase from Colwellia psychrerythraea (strain 34H / ATCC BAA-681) (Vibrio psychroerythus).